We begin with the raw amino-acid sequence, 417 residues long: MITMDTIRKALVCFSILSILVLACGCVNTPEKIDININSNTNNGENTEKPINQENQNVNNVENKKESQSTQNIQSYENKEIKNQENHPLQSNQNYEQTNGNFNEENENAMTNVGESEVNYNNEPAYNYYIEITYPDGTIPDKIEEQMLYYIKVIDPIVGGLAGIDIYVDGNYIGTLDDVYGIVECVFYEPGYHTITAEDNGKILASKTVYVEEGTAYNSGESENYDEYDNNYESNDLQQTQTQFSEIEVYVDDIKPSNSIIITKLAMNPGFLASINGISPDIGVNIEMENGEKINLKYVSMDVDLIIDNPNSESITIDKIILNMFDDEGHSLGRGEVSNIVITPGENPVTVKVNIPINKMGYEILRKLSGEEVFAEISGSAYIEGSGEVPFSGEADLLPPLPTPPFPLPPLPPFPTE.

Residues Ala10–Pro30 traverse the membrane as a helical segment. Residues Gln84–Asn106 form a disordered region. The segment covering Asn86 to Asn106 has biased composition (polar residues). Residues Leu148–Val168 traverse the membrane as a helical segment.

The protein resides in the cell membrane. This is an uncharacterized protein from Methanocaldococcus jannaschii (strain ATCC 43067 / DSM 2661 / JAL-1 / JCM 10045 / NBRC 100440) (Methanococcus jannaschii).